A 318-amino-acid polypeptide reads, in one-letter code: Protoheme IX farnesyltransferase (318 aa).

9 helical membrane passes run 34 to 54, 55 to 75, 95 to 115, 118 to 138, 155 to 175, 182 to 202, 228 to 250, 254 to 273, and 287 to 307; these read VMSL…GQIN, PVIG…SGAL, IPAG…LSAF, IILG…TIFF, IVIG…CVTG, IVLF…LALF, IVVY…FASL, AFAT…VLRM, and FAFS…DYMI.

Belongs to the UbiA prenyltransferase family. Protoheme IX farnesyltransferase subfamily.

It is found in the cell inner membrane. The enzyme catalyses heme b + (2E,6E)-farnesyl diphosphate + H2O = Fe(II)-heme o + diphosphate. Its pathway is porphyrin-containing compound metabolism; heme O biosynthesis; heme O from protoheme: step 1/1. Its function is as follows. Converts heme B (protoheme IX) to heme O by substitution of the vinyl group on carbon 2 of heme B porphyrin ring with a hydroxyethyl farnesyl side group. The sequence is that of Protoheme IX farnesyltransferase from Sinorhizobium fredii (strain NBRC 101917 / NGR234).